A 295-amino-acid chain; its full sequence is Small ribosomal subunit biogenesis GTPase RsgA (295 aa).

A CP-type G domain is found at 68-228 (KNLLVKPHVA…VVDTPGFANL (161 aa)). GTP contacts are provided by residues 117–120 (NKMD) and 170–178 (GLSGVGKSS). Residues C250, C255, H257, and C263 each coordinate Zn(2+).

The protein belongs to the TRAFAC class YlqF/YawG GTPase family. RsgA subfamily. Monomer. Associates with 30S ribosomal subunit, binds 16S rRNA. Zn(2+) serves as cofactor.

The protein localises to the cytoplasm. Its function is as follows. One of several proteins that assist in the late maturation steps of the functional core of the 30S ribosomal subunit. Helps release RbfA from mature subunits. May play a role in the assembly of ribosomal proteins into the subunit. Circularly permuted GTPase that catalyzes slow GTP hydrolysis, GTPase activity is stimulated by the 30S ribosomal subunit. This is Small ribosomal subunit biogenesis GTPase RsgA from Thermotoga neapolitana (strain ATCC 49049 / DSM 4359 / NBRC 107923 / NS-E).